We begin with the raw amino-acid sequence, 198 residues long: Nucleoid occlusion factor SlmA (198 aa).

The 61-residue stretch at 10–70 folds into the HTH tetR-type domain; the sequence is NRREEILQSL…SLIEFIEDSL (61 aa). Positions 33–52 form a DNA-binding region, H-T-H motif; that stretch reads TTAKLAASVGVSEAALYRHF. The stretch at 117-145 forms a coiled coil; it reads EQDRLQGRINQLFERIEAQLRQVMREKKM.

This sequence belongs to the nucleoid occlusion factor SlmA family. In terms of assembly, homodimer. Interacts with FtsZ.

It is found in the cytoplasm. Its subcellular location is the nucleoid. In terms of biological role, required for nucleoid occlusion (NO) phenomenon, which prevents Z-ring formation and cell division over the nucleoid. Acts as a DNA-associated cell division inhibitor that binds simultaneously chromosomal DNA and FtsZ, and disrupts the assembly of FtsZ polymers. SlmA-DNA-binding sequences (SBS) are dispersed on non-Ter regions of the chromosome, preventing FtsZ polymerization at these regions. The chain is Nucleoid occlusion factor SlmA from Klebsiella pneumoniae subsp. pneumoniae (strain ATCC 700721 / MGH 78578).